A 554-amino-acid polypeptide reads, in one-letter code: Glucose-6-phosphate isomerase (554 aa).

The active-site Proton donor is the Glu359. Catalysis depends on residues His390 and Lys518.

Belongs to the GPI family.

The protein resides in the cytoplasm. It catalyses the reaction alpha-D-glucose 6-phosphate = beta-D-fructose 6-phosphate. Its pathway is carbohydrate biosynthesis; gluconeogenesis. It functions in the pathway carbohydrate degradation; glycolysis; D-glyceraldehyde 3-phosphate and glycerone phosphate from D-glucose: step 2/4. In terms of biological role, catalyzes the reversible isomerization of glucose-6-phosphate to fructose-6-phosphate. This is Glucose-6-phosphate isomerase from Pseudomonas aeruginosa (strain LESB58).